A 222-amino-acid chain; its full sequence is Large ribosomal subunit protein uL4 (222 aa).

This sequence belongs to the universal ribosomal protein uL4 family. In terms of assembly, part of the 50S ribosomal subunit.

One of the primary rRNA binding proteins, this protein initially binds near the 5'-end of the 23S rRNA. It is important during the early stages of 50S assembly. It makes multiple contacts with different domains of the 23S rRNA in the assembled 50S subunit and ribosome. In terms of biological role, forms part of the polypeptide exit tunnel. In Acidobacterium capsulatum (strain ATCC 51196 / DSM 11244 / BCRC 80197 / JCM 7670 / NBRC 15755 / NCIMB 13165 / 161), this protein is Large ribosomal subunit protein uL4.